The chain runs to 347 residues: GMP reductase (347 aa).

108–131 (ADFVKMQQILALSPGLKFICIDVA) lines the NADP(+) pocket. Positions 181 and 183 each coordinate K(+). Cys186 acts as the Thioimidate intermediate in catalysis. Position 216–239 (216–239 (IVSDGGCSVPGDVAKAFGGGADFV)) interacts with NADP(+).

This sequence belongs to the IMPDH/GMPR family. GuaC type 1 subfamily. As to quaternary structure, homotetramer.

The enzyme catalyses IMP + NH4(+) + NADP(+) = GMP + NADPH + 2 H(+). Functionally, catalyzes the irreversible NADPH-dependent deamination of GMP to IMP. It functions in the conversion of nucleobase, nucleoside and nucleotide derivatives of G to A nucleotides, and in maintaining the intracellular balance of A and G nucleotides. This Serratia proteamaculans (strain 568) protein is GMP reductase.